The chain runs to 426 residues: Elongation factor Tu, mitochondrial (426 aa).

The N-terminal 27 residues, Met-1–Tyr-27, are a transit peptide targeting the mitochondrion. Residues Lys-34–Thr-230 enclose the tr-type G domain. Positions Gly-43–Thr-50 are G1. Gly-43 to Thr-50 provides a ligand contact to GTP. The G2 stretch occupies residues Gly-84 to Ser-88. The segment at Asp-105–Gly-108 is G3. GTP is bound by residues Asp-105–His-109 and Asn-160–Asp-163. The interval Asn-160–Asp-163 is G4. Residues Ser-198–Leu-200 are G5.

It belongs to the TRAFAC class translation factor GTPase superfamily. Classic translation factor GTPase family. EF-Tu/EF-1A subfamily.

The protein localises to the mitochondrion. The protein operates within protein biosynthesis; polypeptide chain elongation. G-protein that, in its active GTP-bound form, binds to and delivers aminoacyl-tRNA to the A-site of ribosomes during protein biosynthesis. In the presence of a correct codon-anticodon match between the aminoacyl-tRNA and the A-site codon of the ribosome-bound mRNA, the ribosome acts as a GTPase activator and the GTP is hydrolyzed. The inactive GDP-bound form leaves the ribosome and must be recycled before binding another molecule of aminoacyl-tRNA. Required for mitochondrial protein biosynthesis and maintenance of mitochondrial DNA. This Meyerozyma guilliermondii (strain ATCC 6260 / CBS 566 / DSM 6381 / JCM 1539 / NBRC 10279 / NRRL Y-324) (Yeast) protein is Elongation factor Tu, mitochondrial (TUF1).